An 82-amino-acid chain; its full sequence is uncharacterized protein (82 aa).

Its subcellular location is the plastid. It is found in the chloroplast. This is an uncharacterized protein from Vicia faba (Broad bean).